Consider the following 269-residue polypeptide: 3-methyl-2-oxobutanoate hydroxymethyltransferase (269 aa).

Residues Asp-49 and Asp-88 each contribute to the Mg(2+) site. 3-methyl-2-oxobutanoate-binding positions include 49–50 (DS), Asp-88, and Lys-118. Glu-120 provides a ligand contact to Mg(2+). Glu-186 functions as the Proton acceptor in the catalytic mechanism.

This sequence belongs to the PanB family. Homodecamer; pentamer of dimers. Mg(2+) serves as cofactor.

Its subcellular location is the cytoplasm. It catalyses the reaction 3-methyl-2-oxobutanoate + (6R)-5,10-methylene-5,6,7,8-tetrahydrofolate + H2O = 2-dehydropantoate + (6S)-5,6,7,8-tetrahydrofolate. It functions in the pathway cofactor biosynthesis; (R)-pantothenate biosynthesis; (R)-pantoate from 3-methyl-2-oxobutanoate: step 1/2. In terms of biological role, catalyzes the reversible reaction in which hydroxymethyl group from 5,10-methylenetetrahydrofolate is transferred onto alpha-ketoisovalerate to form ketopantoate. In Pelobacter propionicus (strain DSM 2379 / NBRC 103807 / OttBd1), this protein is 3-methyl-2-oxobutanoate hydroxymethyltransferase.